The sequence spans 152 residues: DNA-binding transcriptional activator DecR (152 aa).

The HTH asnC-type domain occupies 2 to 63 (LDKIDRKLLA…LLDPEKIGLG (62 aa)). Residues 21 to 40 (LQALAEAVNLTTTPCWKRLK) constitute a DNA-binding region (H-T-H motif).

In terms of biological role, plays a role in L-cysteine detoxification. Binds to the dlsT(yhaO)-yhaM operon promoter in the presence but not absence of L-cysteine; activates transcription from the dlsT(yhaO)-yhaM operon. This is DNA-binding transcriptional activator DecR (decR) from Escherichia coli O157:H7.